We begin with the raw amino-acid sequence, 40 residues long: Biotin carboxylase (40 aa).

A Biotin carboxylation domain is found at 1–40; sequence ILVANRGEIAVRLLEEAPSPALTPELRITAYLPSGGPFVR. Residues 13–27 enclose the ATP-grasp domain; sequence LLEEAPSPALTPELR.

As to quaternary structure, acetyl-CoA carboxylase is a heterohexamer of biotin carboxyl carrier protein, biotin carboxylase and the two subunits of carboxyl transferase in a 2:2 complex. The cofactor is Mg(2+). Mn(2+) is required as a cofactor.

The enzyme catalyses N(6)-biotinyl-L-lysyl-[protein] + hydrogencarbonate + ATP = N(6)-carboxybiotinyl-L-lysyl-[protein] + ADP + phosphate + H(+). The protein operates within lipid metabolism; malonyl-CoA biosynthesis; malonyl-CoA from acetyl-CoA: step 1/1. Functionally, this protein is a component of the acetyl coenzyme A carboxylase complex; first, biotin carboxylase catalyzes the carboxylation of the carrier protein and then the transcarboxylase transfers the carboxyl group to form malonyl-CoA. The polypeptide is Biotin carboxylase (Populus euphratica (Euphrates poplar)).